We begin with the raw amino-acid sequence, 150 residues long: 3-dehydroquinate dehydratase (150 aa).

Residue Tyr23 is the Proton acceptor of the active site. Substrate contacts are provided by Asn75, His81, and Asp88. The Proton donor role is filled by His101. Substrate contacts are provided by residues Leu102–Ser103 and Arg112.

Belongs to the type-II 3-dehydroquinase family. In terms of assembly, homododecamer.

It carries out the reaction 3-dehydroquinate = 3-dehydroshikimate + H2O. It functions in the pathway metabolic intermediate biosynthesis; chorismate biosynthesis; chorismate from D-erythrose 4-phosphate and phosphoenolpyruvate: step 3/7. In terms of biological role, catalyzes a trans-dehydration via an enolate intermediate. The sequence is that of 3-dehydroquinate dehydratase from Pseudomonas savastanoi pv. phaseolicola (strain 1448A / Race 6) (Pseudomonas syringae pv. phaseolicola (strain 1448A / Race 6)).